Here is a 78-residue protein sequence, read N- to C-terminus: Mandibular organ-inhibiting hormone 1 (78 aa).

3 disulfide bridges follow: C7/C44, C24/C40, and C27/C53.

This sequence belongs to the arthropod CHH/MIH/GIH/VIH hormone family. As to expression, produced by the medulla terminalis X-organ in the eyestalks and transported to the sinus gland where it is stored and released.

It localises to the secreted. In terms of biological role, represses the synthesis of methyl farnesoate, the precursor of insect juvenile hormone III in the mandibular organ. The protein is Mandibular organ-inhibiting hormone 1 of Cancer pagurus (Rock crab).